Reading from the N-terminus, the 737-residue chain is Palmitoyltransferase AKR1 (737 aa).

Residues 1-47 are disordered; the sequence is MKQIDSEDSITVPNDTPEDNSASSMQPVMSNLSIEEHQSENEPIEQE. Residues 1-304 are Cytoplasmic-facing; that stretch reads MKQIDSEDSI…VYFKKSLHTK (304 aa). Residues 9 to 33 show a composition bias toward polar residues; that stretch reads SITVPNDTPEDNSASSMQPVMSNLS. ANK repeat units lie at residues 54 to 84, 90 to 119, 124 to 153, 157 to 190, 194 to 223, and 227 to 256; these read PLLS…DLKH, ERVS…DVNF, LNAT…DPSV, QGFN…DIDC, NGRT…SVKA, and GGFT…DFFQ. 2 helical membrane passes run 305 to 325 and 326 to 346; these read LVTF…FASI and HPIF…YTLK. The Cytoplasmic portion of the chain corresponds to 347–364; that stretch reads KYVIPAYAQRNTRQSFLK. A helical membrane pass occupies residues 365–385; it reads TPFLAGVFSGSVFWASYTWLT. Residues 386–396 are Lumenal-facing; that stretch reads RIMPLTLIEEP. Residues 397–417 traverse the membrane as a helical segment; sequence ITNLLFFAGVVLLASLFVKLV. Topologically, residues 418–493 are cytoplasmic; it reads RSDPGLIPEE…YNDIGLRNHK (76 aa). A DHHC domain is found at 450–500; the sequence is HFCISTWVRKPIRSKFSNFSRALVTRFDHFCPWIYNDIGLRNHKTFLFFIL. The active-site S-palmitoyl cysteine intermediate is the Cys-480. Residues 494-514 form a helical membrane-spanning segment; sequence TFLFFILCLETCIFVFLKLCM. Topologically, residues 515–547 are lumenal; that stretch reads EYFDVLEDTFEDDYDLNCGIFGEDLCAGFFFDT. Residues 548–568 traverse the membrane as a helical segment; sequence FTFLVLAWTCFQGIWVGFLTF. Residues 569–737 are Cytoplasmic-facing; sequence VQLFQTAKGV…ERHYLAEEIV (169 aa).

Belongs to the DHHC palmitoyltransferase family. AKR/ZDHHC17 subfamily.

It is found in the early endosome membrane. The protein resides in the golgi apparatus membrane. It catalyses the reaction L-cysteinyl-[protein] + hexadecanoyl-CoA = S-hexadecanoyl-L-cysteinyl-[protein] + CoA. In terms of biological role, palmitoyltransferase specific for casein kinase 1. The sequence is that of Palmitoyltransferase AKR1 (AKR1) from Lachancea kluyveri (strain ATCC 58438 / CBS 3082 / BCRC 21498 / NBRC 1685 / JCM 7257 / NCYC 543 / NRRL Y-12651) (Yeast).